The primary structure comprises 516 residues: Cilia- and flagella-associated protein 53 (516 aa).

Coiled coils occupy residues 217–283 and 316–440; these read EEKK…LQVK and MQGY…RQMK. Basic and acidic residues-rich tracts occupy residues 417-436 and 461-472; these read KELLESATEEHKQLETDRNA and QAEREEEQREFE. Disordered regions lie at residues 417-443 and 455-475; these read KELLESATEEHKQLETDRNARQMKVAQ and YQQSQRQAEREEEQREFEAGL.

The protein belongs to the CFAP53 family.

The protein localises to the cytoplasm. Its subcellular location is the cytoskeleton. It localises to the cilium axoneme. It is found in the microtubule organizing center. The protein resides in the centrosome. The protein localises to the centriolar satellite. Microtubule inner protein (MIP) part of the dynein-decorated doublet microtubules (DMTs) in cilia axoneme, which is required for motile cilia beating. Regulates motility patterns of both 9+0 and 9+2 motile cilia through differential localization and recruitment of axonemal dynein components. Required for motile cilium formation and movement. Involved in the establishment of left-right symmetry during embryogenesis. The polypeptide is Cilia- and flagella-associated protein 53 (Xenopus laevis (African clawed frog)).